Reading from the N-terminus, the 305-residue chain is Homoserine O-acetyltransferase (305 aa).

Cys132 acts as the Acyl-thioester intermediate in catalysis. The substrate site is built by Lys153 and Ser181. His221 serves as the catalytic Proton acceptor. The active site involves Glu223. Arg235 lines the substrate pocket.

The protein belongs to the MetA family.

Its subcellular location is the cytoplasm. It carries out the reaction L-homoserine + acetyl-CoA = O-acetyl-L-homoserine + CoA. It participates in amino-acid biosynthesis; L-methionine biosynthesis via de novo pathway; O-acetyl-L-homoserine from L-homoserine: step 1/1. Functionally, transfers an acetyl group from acetyl-CoA to L-homoserine, forming acetyl-L-homoserine. The sequence is that of Homoserine O-acetyltransferase from Leuconostoc mesenteroides subsp. mesenteroides (strain ATCC 8293 / DSM 20343 / BCRC 11652 / CCM 1803 / JCM 6124 / NCDO 523 / NBRC 100496 / NCIMB 8023 / NCTC 12954 / NRRL B-1118 / 37Y).